The sequence spans 299 residues: Mimecan (299 aa).

The N-terminal stretch at 1 to 19 is a signal peptide; sequence MKTLQSTLLLFLFVPLIKP. An N-linked (GlcNAc...) (keratan sulfate) asparagine glycan is attached at Asn89. LRR repeat units follow at residues 113 to 132, 133 to 156, 157 to 180, 181 to 200, 201 to 226, 227 to 247, and 248 to 278; these read DAVPPLPKESAYLYARFNKI, KKLTAKDFADIPNLRRLDFTGNLI, EDIEDGTFSKLSLLEELTLAENQL, LKLPVLPPKLTLFNAKYNKI, KSRGIKANTFKKLHNLSFLYLDHNAL, ESVPLNLPESLRVIHLQFNNI, and TSITDDTFCKANDTSYIRDRIEEIRLEGNPV. Asn215 carries N-linked (GlcNAc...) (keratan sulfate) asparagine glycosylation. Asn246 carries N-linked (GlcNAc...) asparagine glycosylation. Cys256 and Cys289 are joined by a disulfide. N-linked (GlcNAc...) (keratan sulfate) asparagine glycosylation is present at Asn259.

This sequence belongs to the small leucine-rich proteoglycan (SLRP) family. SLRP class III subfamily. Post-translationally, contains keratan sulfate. Keratan sulfate attachment is observed in the cornea but the protein also exists in other tissues without keratan sulfate. In terms of processing, the 12 kDa OIF in bone and the 25 kDa KSPG25 protein in cornea are probably proteolytic fragments. As to expression, bone and cornea.

The protein localises to the secreted. The protein resides in the extracellular space. It localises to the extracellular matrix. Induces bone formation in conjunction with TGF-beta-1 or TGF-beta-2. This chain is Mimecan (OGN), found in Bos taurus (Bovine).